The following is a 707-amino-acid chain: Acetyl-coenzyme A synthetase 1 (707 aa).

Residues 242–245 (RGGK) and T361 contribute to the CoA site. ATP-binding positions include 437-439 (GEP), 461-466 (DTYWQT), D553, and R568. Residue S576 participates in CoA binding. R579 is a binding site for ATP. R644 provides a ligand contact to CoA. The Microbody targeting signal signature appears at 705–707 (VKL).

The protein belongs to the ATP-dependent AMP-binding enzyme family.

It localises to the microsome. It is found in the endoplasmic reticulum. It catalyses the reaction acetate + ATP + CoA = acetyl-CoA + AMP + diphosphate. Its function is as follows. May be required for assimilation of ethanol and acetate. The chain is Acetyl-coenzyme A synthetase 1 (ACS1) from Kluyveromyces lactis (strain ATCC 8585 / CBS 2359 / DSM 70799 / NBRC 1267 / NRRL Y-1140 / WM37) (Yeast).